The sequence spans 210 residues: Endonuclease III (210 aa).

Residues 108-127 (RIELESLPGVGRKTANIILN) enclose the HhH domain. 4 residues coordinate [4Fe-4S] cluster: cysteine 187, cysteine 194, cysteine 197, and cysteine 203.

Belongs to the Nth/MutY family. Requires [4Fe-4S] cluster as cofactor.

The enzyme catalyses 2'-deoxyribonucleotide-(2'-deoxyribose 5'-phosphate)-2'-deoxyribonucleotide-DNA = a 3'-end 2'-deoxyribonucleotide-(2,3-dehydro-2,3-deoxyribose 5'-phosphate)-DNA + a 5'-end 5'-phospho-2'-deoxyribonucleoside-DNA + H(+). Functionally, DNA repair enzyme that has both DNA N-glycosylase activity and AP-lyase activity. The DNA N-glycosylase activity releases various damaged pyrimidines from DNA by cleaving the N-glycosidic bond, leaving an AP (apurinic/apyrimidinic) site. The AP-lyase activity cleaves the phosphodiester bond 3' to the AP site by a beta-elimination, leaving a 3'-terminal unsaturated sugar and a product with a terminal 5'-phosphate. The protein is Endonuclease III of Buchnera aphidicola subsp. Acyrthosiphon pisum (strain APS) (Acyrthosiphon pisum symbiotic bacterium).